We begin with the raw amino-acid sequence, 419 residues long: Gamma-glutamyl phosphate reductase (419 aa).

It belongs to the gamma-glutamyl phosphate reductase family.

The protein localises to the cytoplasm. The enzyme catalyses L-glutamate 5-semialdehyde + phosphate + NADP(+) = L-glutamyl 5-phosphate + NADPH + H(+). It functions in the pathway amino-acid biosynthesis; L-proline biosynthesis; L-glutamate 5-semialdehyde from L-glutamate: step 2/2. Catalyzes the NADPH-dependent reduction of L-glutamate 5-phosphate into L-glutamate 5-semialdehyde and phosphate. The product spontaneously undergoes cyclization to form 1-pyrroline-5-carboxylate. The sequence is that of Gamma-glutamyl phosphate reductase from Azoarcus sp. (strain BH72).